A 134-amino-acid chain; its full sequence is Submaxillary gland androgen-regulated protein 3A (134 aa).

Residues 1–22 (MKSLTWILGLWALAACFTPGES) form the signal peptide. The segment at 19–134 (PGESQRGPRG…TDPALPTPAP (116 aa)) is disordered. 3 stretches are compositionally biased toward pro residues: residues 28 to 43 (GPYP…PPCF), 50 to 85 (VPPP…PPYG), and 94 to 119 (LPPP…PPFF).

This sequence belongs to the PROL1/PROL3 family.

Its subcellular location is the secreted. Its function is as follows. May play a role in protection or detoxification. The sequence is that of Submaxillary gland androgen-regulated protein 3A (SMR3A) from Homo sapiens (Human).